The chain runs to 131 residues: Dihydroneopterin aldolase 2 (131 aa).

Residues glutamate 29, tyrosine 61, and 80-81 (LE) each bind substrate. Lysine 107 acts as the Proton donor/acceptor in catalysis.

Belongs to the DHNA family. As to quaternary structure, homooctamer. Forms a hollow cylinder assembled from two ring-shaped tetramers. In terms of tissue distribution, expressed in roots, leaves, stems and siliques.

It catalyses the reaction 7,8-dihydroneopterin = 6-hydroxymethyl-7,8-dihydropterin + glycolaldehyde. It participates in cofactor biosynthesis; tetrahydrofolate biosynthesis; 2-amino-4-hydroxy-6-hydroxymethyl-7,8-dihydropteridine diphosphate from 7,8-dihydroneopterin triphosphate: step 3/4. Catalyzes the conversion of 7,8-dihydroneopterin into 6-hydroxymethyl-7,8-dihydropterin, a biosynthetic precursor of the vitamin tetrahydrofolate. Can use L-threo-dihydroneopterin and D-erythro-dihydroneopterin as substrates for the formation of 6-hydroxymethyldihydropterin, but it can also catalyze the epimerization of carbon 2' of dihydroneopterin and dihydromonapterin. The protein is Dihydroneopterin aldolase 2 of Arabidopsis thaliana (Mouse-ear cress).